The following is a 488-amino-acid chain: Aspartyl/glutamyl-tRNA(Asn/Gln) amidotransferase subunit B (488 aa).

Belongs to the GatB/GatE family. GatB subfamily. As to quaternary structure, heterotrimer of A, B and C subunits.

The enzyme catalyses L-glutamyl-tRNA(Gln) + L-glutamine + ATP + H2O = L-glutaminyl-tRNA(Gln) + L-glutamate + ADP + phosphate + H(+). The catalysed reaction is L-aspartyl-tRNA(Asn) + L-glutamine + ATP + H2O = L-asparaginyl-tRNA(Asn) + L-glutamate + ADP + phosphate + 2 H(+). Allows the formation of correctly charged Asn-tRNA(Asn) or Gln-tRNA(Gln) through the transamidation of misacylated Asp-tRNA(Asn) or Glu-tRNA(Gln) in organisms which lack either or both of asparaginyl-tRNA or glutaminyl-tRNA synthetases. The reaction takes place in the presence of glutamine and ATP through an activated phospho-Asp-tRNA(Asn) or phospho-Glu-tRNA(Gln). In Neorickettsia sennetsu (strain ATCC VR-367 / Miyayama) (Ehrlichia sennetsu), this protein is Aspartyl/glutamyl-tRNA(Asn/Gln) amidotransferase subunit B.